A 1178-amino-acid polypeptide reads, in one-letter code: Mannosyltransferase regulator 4 (1178 aa).

Topologically, residues 1–27 (MLQRISSKLHRRFLSGLLRVKHYPLRR) are cytoplasmic. Residues 28 to 48 (ILLPLILLQIIIITFIWSNSP) form a helical; Signal-anchor for type II membrane protein membrane-spanning segment. Over 49–1178 (QRNGLGRDAD…KKKQEEGHSN (1130 aa)) the chain is Lumenal. Residues 519 to 521 (DFD) carry the DXD motif. The segment at 1041 to 1178 (EKKKKEEEEK…KKKQEEGHSN (138 aa)) is disordered. Repeat copies occupy residues 1042 to 1049 (KKKKEEEE), 1050 to 1057 (KKKKEEEE), 1058 to 1065 (KKKKEEEE), 1066 to 1073 (KKKKEEEE), 1074 to 1081 (KKKKEEEE), and 1082 to 1089 (KKKKEEEE). The tract at residues 1042–1174 (KKKKEEEEKK…EEEEKKKQEE (133 aa)) is 17 X 8 AA tandem repeats of K-K-K-K-E-E-E-E. One copy of the 7; approximate repeat lies at 1090–1097 (KKKQEEEE). Repeat unit 8 spans residues 1098-1105 (KKKKEEEE). Residues 1106–1113 (KKKQEEGE) form a 9; approximate repeat. One copy of the 10; approximate repeat lies at 1114–1121 (KMKNEDEE). The 11; approximate repeat unit spans residues 1122-1129 (NKKNEDEE). The stretch at 1130 to 1137 (KKKNEEEE) is repeat 12. The stretch at 1138–1144 (KKKQEEK) is one 13; approximate repeat. The 14; approximate repeat unit spans residues 1145 to 1152 (NKKNEDEE). One copy of the 15; approximate repeat lies at 1153 to 1160 (KKKQEEEE). The 16; approximate repeat unit spans residues 1161 to 1168 (KKKNEEEE). A 17; truncated repeat occupies 1169–1174 (KKKQEE).

The protein belongs to the MNN4 family.

The protein resides in the golgi apparatus membrane. Its function is as follows. Golgi apparatus protein involved in N-glycan mannosylphosphorylation. While MNN4 seems to have a regulatory role in N-glycan mannosylphosphorylation, a transferase activity of MNN4 can not be ruled out. Mediates mannosylphosphate transfer in both the core and outer chain portions of N-linked oligosaccharides. Has partially redundant function with MNN14. This chain is Mannosyltransferase regulator 4, found in Saccharomyces cerevisiae (strain ATCC 204508 / S288c) (Baker's yeast).